The primary structure comprises 512 residues: Cobyric acid synthase (512 aa).

Positions 262–442 (WLRVAAIRLP…WHGLLETDRF (181 aa)) constitute a GATase cobBQ-type domain. The active-site Nucleophile is the cysteine 343. The active site involves histidine 434.

This sequence belongs to the CobB/CobQ family. CobQ subfamily.

Its pathway is cofactor biosynthesis; adenosylcobalamin biosynthesis. Its function is as follows. Catalyzes amidations at positions B, D, E, and G on adenosylcobyrinic A,C-diamide. NH(2) groups are provided by glutamine, and one molecule of ATP is hydrogenolyzed for each amidation. In Rhodococcus jostii (strain RHA1), this protein is Cobyric acid synthase.